Consider the following 81-residue polypeptide: uncharacterized protein (81 aa).

The first 16 residues, 1–16, serve as a signal peptide directing secretion; the sequence is MNRLTFYGLCLSGAVG. The interval 55 to 81 is disordered; that stretch reads TIDPHHNHHDDHHDSHGHGHGKIKGHH. The span at 57–71 shows a compositional bias: basic and acidic residues; sequence DPHHNHHDDHHDSHG. Positions 72–81 are enriched in basic residues; sequence HGHGKIKGHH.

The protein resides in the secreted. This is an uncharacterized protein from Dictyostelium discoideum (Social amoeba).